A 189-amino-acid chain; its full sequence is Xanthine phosphoribosyltransferase (189 aa).

The xanthine site is built by Leu-20 and Asn-27. Residue 127 to 131 coordinates 5-phospho-alpha-D-ribose 1-diphosphate; that stretch reads AYGNA. Lys-155 is a xanthine binding site.

It belongs to the purine/pyrimidine phosphoribosyltransferase family. Xpt subfamily. Homodimer.

Its subcellular location is the cytoplasm. It carries out the reaction XMP + diphosphate = xanthine + 5-phospho-alpha-D-ribose 1-diphosphate. It functions in the pathway purine metabolism; XMP biosynthesis via salvage pathway; XMP from xanthine: step 1/1. Its function is as follows. Converts the preformed base xanthine, a product of nucleic acid breakdown, to xanthosine 5'-monophosphate (XMP), so it can be reused for RNA or DNA synthesis. This is Xanthine phosphoribosyltransferase from Bacteroides fragilis (strain ATCC 25285 / DSM 2151 / CCUG 4856 / JCM 11019 / LMG 10263 / NCTC 9343 / Onslow / VPI 2553 / EN-2).